The chain runs to 283 residues: Glutamate racemase (283 aa).

Substrate is bound by residues 28 to 29 and 60 to 61; these read DS and YG. Cysteine 92 functions as the Proton donor/acceptor in the catalytic mechanism. 93 to 94 lines the substrate pocket; that stretch reads NT. Catalysis depends on cysteine 204, which acts as the Proton donor/acceptor. 205 to 206 provides a ligand contact to substrate; the sequence is TH.

The protein belongs to the aspartate/glutamate racemases family.

The enzyme catalyses L-glutamate = D-glutamate. It participates in cell wall biogenesis; peptidoglycan biosynthesis. Provides the (R)-glutamate required for cell wall biosynthesis. This is Glutamate racemase from Klebsiella pneumoniae (strain 342).